A 201-amino-acid polypeptide reads, in one-letter code: Small ribosomal subunit protein uS4c (201 aa).

Positions 20-43 are disordered; the sequence is GLTNKRPKSRNDPTNQSSSRKISQ. The span at 31-41 shows a compositional bias: polar residues; the sequence is DPTNQSSSRKI. The region spanning 89–157 is the S4 RNA-binding domain; sequence MRLDNIIFRL…IGKNLDLSQK (69 aa).

Belongs to the universal ribosomal protein uS4 family. Part of the 30S ribosomal subunit. Contacts protein S5. The interaction surface between S4 and S5 is involved in control of translational fidelity.

The protein localises to the plastid. The protein resides in the chloroplast. One of the primary rRNA binding proteins, it binds directly to 16S rRNA where it nucleates assembly of the body of the 30S subunit. In terms of biological role, with S5 and S12 plays an important role in translational accuracy. The protein is Small ribosomal subunit protein uS4c (rps4) of Cycas taitungensis (Prince sago).